The chain runs to 160 residues: Large ribosomal subunit protein uL13 (160 aa).

This sequence belongs to the universal ribosomal protein uL13 family. In terms of assembly, part of the 50S ribosomal subunit.

Its function is as follows. This protein is one of the early assembly proteins of the 50S ribosomal subunit, although it is not seen to bind rRNA by itself. It is important during the early stages of 50S assembly. The protein is Large ribosomal subunit protein uL13 of Orientia tsutsugamushi (strain Ikeda) (Rickettsia tsutsugamushi).